The primary structure comprises 1239 residues: Potassium channel subfamily T member 1 (1239 aa).

The tract at residues 1 to 45 (MARAKLPRSPSEGKAGPGDTPAGSAAPEEPHGLSPLLPTRGGGSV) is disordered. The Cytoplasmic segment spans residues 1-93 (MARAKLPRSP…LFFIKNQRSS (93 aa)). A helical transmembrane segment spans residues 94–126 (LRIRLFNFSLKLLTCLLYIVRVLLDNPDQGIGC). The Extracellular portion of the chain corresponds to 127–153 (WGCTKYNYTFNGSSSEFHWAPILWVER). Asparagine 133 and asparagine 137 each carry an N-linked (GlcNAc...) asparagine glycan. A helical transmembrane segment spans residues 154–178 (KMALWVIQVIVATISFLETMLLIYL). Residues 179–192 (SYKGNIWEQIFHVS) lie on the Cytoplasmic side of the membrane. Residues 193-208 (FVLEMINTLPFIITVF) traverse the membrane as a helical segment. Residues 209–215 (WPPLRNL) lie on the Extracellular side of the membrane. A helical transmembrane segment spans residues 216-233 (FIPVFLNCWLAKHALENM). Over 234–246 (INDFHRAILRTQS) the chain is Cytoplasmic. Residues 247–274 (AMFNQVLILFCTLLCLVFTGTCGIQHLE) traverse the membrane as a helical segment. The Extracellular portion of the chain corresponds to 275-281 (RAGGNLN). An intramembrane region (pore-forming) is located at residues 282–302 (LLTSFYFCIVTFSTVGFGDVT). Positions 296 and 297 each coordinate K(+). Residues 303-304 (PK) are Extracellular-facing. The chain crosses the membrane as a helical span at residues 305-338 (IWPSQLLVVILICVTLVVLPLQFEELVYLWMERQ). Residues 339–1239 (KSGGNYSRHR…NPETRDETQL (901 aa)) lie on the Cytoplasmic side of the membrane. Residues 352–488 (EKHVVLCVSS…FHVKFADHVV (137 aa)) form the RCK N-terminal 1 domain. Na(+)-binding residues include leucine 513, histidine 516, serine 538, and asparagine 540. The segment at 658–689 (QNTDCRPSQGGSGGGGGKLTLPTENGSGSRRP) is disordered. Residues cysteine 758 and cysteine 759 each contribute to the Zn(2+) site. K(+) contacts are provided by arginine 761 and lysine 764. The Na(+) site is built by arginine 761 and lysine 764. Residues cysteine 766 and histidine 768 each coordinate Zn(2+). K(+) is bound by residues asparagine 769, tyrosine 771, tyrosine 777, and glycine 778. Tyrosine 771 provides a ligand contact to Na(+). Phenylalanine 779 is a binding site for Na(+). The region spanning 781 to 921 (NKLIIVSAET…QFRAKDSYSL (141 aa)) is the RCK N-terminal 2 domain. K(+) contacts are provided by serine 787, leucine 818, aspartate 820, glycine 842, and aspartate 865. Disordered stretches follow at residues 1053–1081 (REAKGPWGTRAASGGGSTHGRHGGSADPV) and 1212–1239 (TSSSQSRKSSCSNKLSSCNPETRDETQL). Positions 1213–1230 (SSSQSRKSSCSNKLSSCN) are enriched in low complexity.

The protein belongs to the potassium channel family. Calcium-activated (TC 1.A.1.3) subfamily. KCa4.1/KCNT1 sub-subfamily. Homotetramer; which constitutes the Na(+)-activated K(+) channel. Interacts with KCNT2; these heterodimer channels differ from the homomers in their unitary conductance, kinetic behavior, subcellular localization, and response to activation of protein kinase C. Interacts (via C-terminus) with FMR1; this interaction alters gating properties of KCNT1. Interacts with CRBN via its cytoplasmic C-terminus. As to quaternary structure, does not interact with KCNT2. In terms of processing, phosphorylated by protein kinase C. Phosphorylation of the C-terminal domain increases channel activity. Detected in brain and brainstem, in vestibular and oculomotor nuclei, the medial nucleus of the trapezoid in the auditory system, in olfactory bulb, red nucleus, and deep cerebellar nuclei. Detected in thalamus, substantia nigra, and amygdala (at protein level). Highly expressed in the brain and kidney.

It localises to the cell membrane. It catalyses the reaction K(+)(in) = K(+)(out). Activated by high intracellular Na(+) level. In addition to activation by Na(+), is cooperatively activated by intracellular Cl(-) levels. Activated upon stimulation of G-protein coupled receptors, such as CHRM1 and GRIA1. Its function is as follows. Sodium-activated K(+) channel. Acts as an important mediator of neuronal membrane excitability. Contributes to the delayed outward currents. Regulates neuronal bursting in sensory neurons. Contributes to synaptic development and plasticity. The protein is Potassium channel subfamily T member 1 (Kcnt1) of Rattus norvegicus (Rat).